The following is a 109-amino-acid chain: Spermidine export protein MdtI (109 aa).

Helical transmembrane passes span Trp6–Leu26, Cys36–Val56, Ala64–Phe84, and Leu88–Phe108.

This sequence belongs to the drug/metabolite transporter (DMT) superfamily. Small multidrug resistance (SMR) (TC 2.A.7.1) family. MdtI subfamily. Forms a complex with MdtJ.

The protein localises to the cell inner membrane. Catalyzes the excretion of spermidine. The sequence is that of Spermidine export protein MdtI from Salmonella choleraesuis (strain SC-B67).